Here is a 389-residue protein sequence, read N- to C-terminus: Jasmonate O-methyltransferase (389 aa).

Y18 is an S-adenosyl-L-homocysteine binding site. Q25 serves as a coordination point for jasmonate. S-adenosyl-L-homocysteine contacts are provided by C60, N65, D97, L98, S142, and F143. Residues H163 and W164 each contribute to the jasmonate site. Residues N186, D272, F274, and N275 each contribute to the Mg(2+) site.

The protein belongs to the methyltransferase superfamily. Type-7 methyltransferase family. The cofactor is Mg(2+). In terms of tissue distribution, expressed in rosettes, cauline leaves and developing flowers but not in young seedlings.

Its subcellular location is the cytoplasm. The protein resides in the nucleus. It catalyses the reaction jasmonate + S-adenosyl-L-methionine = methyl (-)-jasmonate + S-adenosyl-L-homocysteine. It functions in the pathway lipid metabolism; oxylipin biosynthesis. Functionally, catalyzes the methylation of jasmonate into methyljasmonate, a plant volatile that acts as an important cellular regulator mediating diverse developmental processes and defense responses. The polypeptide is Jasmonate O-methyltransferase (Arabidopsis thaliana (Mouse-ear cress)).